We begin with the raw amino-acid sequence, 569 residues long: Proline--tRNA ligase (569 aa).

It belongs to the class-II aminoacyl-tRNA synthetase family. ProS type 1 subfamily. In terms of assembly, homodimer.

It localises to the cytoplasm. It catalyses the reaction tRNA(Pro) + L-proline + ATP = L-prolyl-tRNA(Pro) + AMP + diphosphate. In terms of biological role, catalyzes the attachment of proline to tRNA(Pro) in a two-step reaction: proline is first activated by ATP to form Pro-AMP and then transferred to the acceptor end of tRNA(Pro). As ProRS can inadvertently accommodate and process non-cognate amino acids such as alanine and cysteine, to avoid such errors it has two additional distinct editing activities against alanine. One activity is designated as 'pretransfer' editing and involves the tRNA(Pro)-independent hydrolysis of activated Ala-AMP. The other activity is designated 'posttransfer' editing and involves deacylation of mischarged Ala-tRNA(Pro). The misacylated Cys-tRNA(Pro) is not edited by ProRS. This Dehalococcoides mccartyi (strain ATCC BAA-2100 / JCM 16839 / KCTC 5957 / BAV1) protein is Proline--tRNA ligase.